A 428-amino-acid polypeptide reads, in one-letter code: AP-1 complex subunit mu-1 (428 aa).

The MHD domain maps to K170–R426.

This sequence belongs to the adaptor complexes medium subunit family. Adaptor protein complex 1 (AP-1) is a heterotetramer composed of two large adaptins (gamma-type subunit and beta-type subunit), a medium adaptin (mu-type subunit) and a small adaptin (sigma-type subunit).

Its subcellular location is the golgi apparatus. The protein resides in the cytoplasmic vesicle. It is found in the clathrin-coated vesicle membrane. Subunit of clathrin-associated adaptor protein complex 1 that plays a role in protein sorting at the trans-Golgi network and early endosomes (TGN/EE). The AP complexes mediate the recruitment of clathrin to membranes and the recognition of sorting signals within the cytosolic tails of transmembrane cargo molecules. Functions redundantly with AP1M2 in multiple post-Golgi trafficking pathways leading from the TGN to the vacuole, the plasma membrane, and the cell-division plane. This chain is AP-1 complex subunit mu-1 (AP1M1), found in Arabidopsis thaliana (Mouse-ear cress).